Consider the following 415-residue polypeptide: Methylaspartate ammonia-lyase 2 (415 aa).

Residue glutamine 173 participates in (2S,3S)-3-methyl-L-aspartate binding. Positions 238, 273, and 307 each coordinate Mg(2+). Position 329 (glutamine 329) interacts with (2S,3S)-3-methyl-L-aspartate. Lysine 331 acts as the Proton acceptor in catalysis. 360–361 (TC) contacts (2S,3S)-3-methyl-L-aspartate.

Belongs to the methylaspartate ammonia-lyase family. In terms of assembly, homodimer. The cofactor is Mg(2+).

It catalyses the reaction (2S,3S)-3-methyl-L-aspartate = mesaconate + NH4(+). It functions in the pathway amino-acid degradation; L-glutamate degradation via mesaconate pathway; acetate and pyruvate from L-glutamate: step 2/4. Involved in the methylaspartate cycle. Catalyzes the formation of the alpha,beta-unsaturated bond by the reversible anti elimination of ammonia from L-threo-beta-methylaspartate (L-threo-(2S,3S)-3-methylaspartate) to give mesaconate. This Carboxydothermus hydrogenoformans (strain ATCC BAA-161 / DSM 6008 / Z-2901) protein is Methylaspartate ammonia-lyase 2.